We begin with the raw amino-acid sequence, 398 residues long: MSERVILAYSGGLDTSVAISWIGKETGREVVAVAIDLGQGGEHMDVIRQRALDCGAVEAVVVDARDEFAEGYCLPTVLNNALYMDRYPLVSAISRPLIVKHLVAAAREHGGGIVAHGCTGKGNDQVRFEVGFASLAPDLEVLAPVRDYAWTREKAIAFAEENAIPINVTKRSPFSIDQNVWGRAVETGFLEHLWNAPTKDIYAYTEDPTINWGVPDEVIVGFERGVPVSVDGKPVSMLAAIEELNRRAGAQGVGRLDVVEDRLVGIKSREIYEAPGAMVLITAHTELEHVTLERELGRFKRQTDQRWAELVYDGLWYSPLKAALEAFVAKTQEHVSGEVRLVLHGGHIAVNGRRSAESLYDFNLATYDEGDSFDQSAARGFVYVHGLSSKLAARRDLR.

8–16 (AYSGGLDTS) provides a ligand contact to ATP. L-citrulline is bound at residue tyrosine 87. An ATP-binding site is contributed by glycine 117. Residues threonine 119, asparagine 123, and aspartate 124 each coordinate L-aspartate. Asparagine 123 lines the L-citrulline pocket. 4 residues coordinate L-citrulline: arginine 127, serine 175, glutamate 260, and tyrosine 272.

The protein belongs to the argininosuccinate synthase family. Type 1 subfamily. Homotetramer.

It is found in the cytoplasm. It catalyses the reaction L-citrulline + L-aspartate + ATP = 2-(N(omega)-L-arginino)succinate + AMP + diphosphate + H(+). It participates in amino-acid biosynthesis; L-arginine biosynthesis; L-arginine from L-ornithine and carbamoyl phosphate: step 2/3. The polypeptide is Argininosuccinate synthase (Mycobacterium tuberculosis (strain ATCC 25618 / H37Rv)).